A 159-amino-acid polypeptide reads, in one-letter code: 6,7-dimethyl-8-ribityllumazine synthase (159 aa).

Residues W26, 58–60 (SFE), and 80–82 (VVI) contribute to the 5-amino-6-(D-ribitylamino)uracil site. 85–86 (GT) is a (2S)-2-hydroxy-3-oxobutyl phosphate binding site. H88 (proton donor) is an active-site residue. F113 lines the 5-amino-6-(D-ribitylamino)uracil pocket. Position 127 (R127) interacts with (2S)-2-hydroxy-3-oxobutyl phosphate.

It belongs to the DMRL synthase family.

The enzyme catalyses (2S)-2-hydroxy-3-oxobutyl phosphate + 5-amino-6-(D-ribitylamino)uracil = 6,7-dimethyl-8-(1-D-ribityl)lumazine + phosphate + 2 H2O + H(+). It participates in cofactor biosynthesis; riboflavin biosynthesis; riboflavin from 2-hydroxy-3-oxobutyl phosphate and 5-amino-6-(D-ribitylamino)uracil: step 1/2. Catalyzes the formation of 6,7-dimethyl-8-ribityllumazine by condensation of 5-amino-6-(D-ribitylamino)uracil with 3,4-dihydroxy-2-butanone 4-phosphate. This is the penultimate step in the biosynthesis of riboflavin. The chain is 6,7-dimethyl-8-ribityllumazine synthase from Renibacterium salmoninarum (strain ATCC 33209 / DSM 20767 / JCM 11484 / NBRC 15589 / NCIMB 2235).